A 407-amino-acid chain; its full sequence is Na(+)-translocating NADH-quinone reductase subunit F (407 aa).

The helical transmembrane segment at 3–23 threads the bilayer; that stretch reads IILGVAMFTGIVMVLVLLILF. Residues 32–126 form the 2Fe-2S ferredoxin-type domain; it reads GDIAVEVNGD…NLKIELPEEI (95 aa). 4 residues coordinate [2Fe-2S] cluster: Cys69, Cys75, Cys78, and Cys110. The FAD-binding FR-type domain maps to 129–269; sequence VKKWECEVIS…SGPFGEFFAK (141 aa).

The protein belongs to the NqrF family. In terms of assembly, composed of six subunits; NqrA, NqrB, NqrC, NqrD, NqrE and NqrF. The cofactor is [2Fe-2S] cluster. Requires FAD as cofactor.

The protein resides in the cell inner membrane. The enzyme catalyses a ubiquinone + n Na(+)(in) + NADH + H(+) = a ubiquinol + n Na(+)(out) + NAD(+). Its function is as follows. NQR complex catalyzes the reduction of ubiquinone-1 to ubiquinol by two successive reactions, coupled with the transport of Na(+) ions from the cytoplasm to the periplasm. The first step is catalyzed by NqrF, which accepts electrons from NADH and reduces ubiquinone-1 to ubisemiquinone by a one-electron transfer pathway. The polypeptide is Na(+)-translocating NADH-quinone reductase subunit F (Serratia proteamaculans (strain 568)).